The primary structure comprises 237 residues: Lectin (237 aa).

Asn69 carries an N-linked (GlcNAc...) asparagine glycan. At Ile106 the chain carries Blocked amino end (Ile). The Mn(2+) site is built by Glu115 and Asp117. Residues Asp117, Tyr120, Asn122, and Asp127 each contribute to the Ca(2+) site. 2 residues coordinate Mn(2+): Asp127 and His132.

The protein belongs to the leguminous lectin family. As to quaternary structure, tetramer of two alpha and two beta chains. In terms of processing, the N-terminus of alpha chain is blocked. The alpha and beta chains are produced by proteolytic processing, with probably the loss of intervening amino acid(s).

In terms of biological role, D-mannose/D-glucose-binding lectin. Requires Ca(2+) and Mn(2+) ions for full activity. The sequence is that of Lectin from Lablab purpureus (Hyacinth bean).